We begin with the raw amino-acid sequence, 146 residues long: Hemoglobin subunit beta-1 (146 aa).

The Globin domain occupies 2-146 (GLTAHDRQLI…IADALGKGYH (145 aa)). The heme b site is built by H63 and H92.

It belongs to the globin family. In terms of assembly, heterotetramer of two alpha chains and two beta chains. As to expression, red blood cells.

In terms of biological role, involved in oxygen transport from the lung to the various peripheral tissues. This chain is Hemoglobin subunit beta-1 (hbb1), found in Xenopus laevis (African clawed frog).